The primary structure comprises 394 residues: Guanine nucleotide-binding protein G(s) subunit alpha (394 aa).

The segment at 1-23 (MGCLGNSKTEDQRNEEKAQREAN) is disordered. A lipid anchor (N-palmitoyl glycine) is attached at G2. The S-palmitoyl cysteine moiety is linked to residue C3. Over residues 8 to 23 (KTEDQRNEEKAQREAN) the composition is skewed to basic and acidic residues. The 356-residue stretch at 39–394 (ATHRLLLLGA…RMHLRQYELL (356 aa)) folds into the G-alpha domain. The G1 motif stretch occupies residues 42–55 (RLLLLGAGESGKST). Residue 47 to 55 (GAGESGKST) coordinates GTP. S54 lines the Mg(2+) pocket. Positions 68–90 (FNGEGGEEDPQAARSNSDGEKAT) are disordered. The segment at 196-204 (DLLRCRVLT) is G2 motif. GTP contacts are provided by residues 197 to 204 (LLRCRVLT), 223 to 227 (DVGGQ), 292 to 295 (NKQD), and A366. T204 serves as a coordination point for Mg(2+). The G3 motif stretch occupies residues 219–228 (FHMFDVGGQR). The interval 288 to 295 (ILFLNKQD) is G4 motif. The interval 364–369 (TCAVDT) is G5 motif.

The protein belongs to the G-alpha family. G(s) subfamily. In terms of assembly, heterotrimeric G proteins are composed of 3 units; alpha, beta and gamma. The alpha chain contains the guanine nucleotide binding site. Interacts with CRY1; the interaction may block GPCR-mediated regulation of cAMP concentrations. Interacts with ADCY6 and stimulates its adenylyl cyclase activity. Interacts with ADCY2 and ADCY5. Stimulates the ADCY5 adenylyl cyclase activity. Interaction with SASH1.

Its subcellular location is the cell membrane. Guanine nucleotide-binding proteins (G proteins) function as transducers in numerous signaling pathways controlled by G protein-coupled receptors (GPCRs). Signaling involves the activation of adenylyl cyclases, resulting in increased levels of the signaling molecule cAMP. GNAS functions downstream of several GPCRs, including beta-adrenergic receptors. Stimulates the Ras signaling pathway via RAPGEF2. The protein is Guanine nucleotide-binding protein G(s) subunit alpha (GNAS) of Cricetulus griseus (Chinese hamster).